The chain runs to 435 residues: GTPase Obg (435 aa).

The 159-residue stretch at 1–159 folds into the Obg domain; sequence MAFIDKCKIV…VEVLLELKTI (159 aa). The 170-residue stretch at 160-329 folds into the OBG-type G domain; the sequence is ADIGIIGLPN…MLDDVIKIYF (170 aa). GTP is bound by residues 166–173, 191–195, 212–215, 282–285, and 310–312; these read GLPNAGKS, FTTLN, DIPG, NKID, and SAL. The Mg(2+) site is built by serine 173 and threonine 193. The OCT domain occupies 357–435; the sequence is KSKELDKTIE…IYDITLEFEE (79 aa).

Belongs to the TRAFAC class OBG-HflX-like GTPase superfamily. OBG GTPase family. As to quaternary structure, monomer. Mg(2+) is required as a cofactor.

It localises to the cytoplasm. Functionally, an essential GTPase which binds GTP, GDP and possibly (p)ppGpp with moderate affinity, with high nucleotide exchange rates and a fairly low GTP hydrolysis rate. Plays a role in control of the cell cycle, stress response, ribosome biogenesis and in those bacteria that undergo differentiation, in morphogenesis control. This is GTPase Obg from Ureaplasma parvum serovar 3 (strain ATCC 27815 / 27 / NCTC 11736).